Here is a 963-residue protein sequence, read N- to C-terminus: Aminopeptidase N (963 aa).

Topologically, residues 2 to 8 (AKGFYIS) are cytoplasmic. A helical; Signal-anchor for type II membrane protein transmembrane segment spans residues 9-32 (KALGILGILLGVAAVATIIALSVV). The segment at 33-64 (YAQEKNKNAEHVPQAPTSPTITTTAAITLDQS) is cytosolic Ser/Thr-rich junction. The Extracellular segment spans residues 33–963 (YAQEKNKNAE…VVLNWFIEHS (931 aa)). A metalloprotease region spans residues 65–963 (KPWNRYRLPT…VVLNWFIEHS (899 aa)). N-linked (GlcNAc...) asparagine glycans are attached at residues asparagine 82 and asparagine 124. Tyrosine 171 bears the Sulfotyrosine mark. Residues asparagine 229, asparagine 237, asparagine 258, asparagine 286, asparagine 314, and asparagine 328 are each glycosylated (N-linked (GlcNAc...) asparagine). 347 to 351 (GAMEN) contacts substrate. Histidine 383 contributes to the Zn(2+) binding site. The active-site Proton acceptor is glutamate 384. Zn(2+) is bound by residues histidine 387 and glutamate 406. Residues asparagine 506, asparagine 556, asparagine 569, asparagine 622, asparagine 646, and asparagine 736 are each glycosylated (N-linked (GlcNAc...) asparagine). An interaction with TGEV spike glycoprotein region spans residues 717–813 (KYLRKQVEPL…DQWDFAWGQL (97 aa)). Intrachain disulfides connect cysteine 758–cysteine 765 and cysteine 795–cysteine 831.

This sequence belongs to the peptidase M1 family. In terms of assembly, homodimer. Interacts with SLC6A19. (Microbial infection) Interacts with TGEV and PRCoV spike glycoprotein. Zn(2+) is required as a cofactor. Sulfated. In terms of processing, N- and O-glycosylated. Post-translationally, may undergo proteolysis and give rise to a soluble form.

It is found in the cell membrane. It carries out the reaction Release of an N-terminal amino acid, Xaa-|-Yaa- from a peptide, amide or arylamide. Xaa is preferably Ala, but may be most amino acids including Pro (slow action). When a terminal hydrophobic residue is followed by a prolyl residue, the two may be released as an intact Xaa-Pro dipeptide.. In terms of biological role, broad specificity aminopeptidase which plays a role in the final digestion of peptides generated from hydrolysis of proteins by gastric and pancreatic proteases. Also involved in the processing of various peptides including peptide hormones, such as angiotensin III and IV, neuropeptides, and chemokines. May also be involved the cleavage of peptides bound to major histocompatibility complex class II molecules of antigen presenting cells. May have a role in angiogenesis and promote cholesterol crystallization. It is able to degrade Leu-enkephalin and Met-enkephalin but not cholecystokinin CCK8, neuromedin C (GRP-10), somatostatin-14, substance P and vasoactive intestinal peptide. May have a role in amino acid transport by acting as binding partner of amino acid transporter SLC6A19 and regulating its activity. Its function is as follows. (Microbial infection) In case of porcine transmissible gastroenteritis coronavirus (TGEV) and porcine respiratory coronavirus (PRCoV) infections, serves as a receptor for TGEV and PRCoV spike glycoprotein in a species-specific manner. In Sus scrofa (Pig), this protein is Aminopeptidase N (ANPEP).